The chain runs to 480 residues: Protein nucleotidyltransferase YdiU (480 aa).

ATP is bound by residues G86, G88, R89, K109, D121, G122, R172, and R179. The active-site Proton acceptor is D248. Residues N249 and D258 each contribute to the Mg(2+) site. D258 contacts ATP.

It belongs to the SELO family. The cofactor is Mg(2+). Mn(2+) is required as a cofactor.

It catalyses the reaction L-seryl-[protein] + ATP = 3-O-(5'-adenylyl)-L-seryl-[protein] + diphosphate. The catalysed reaction is L-threonyl-[protein] + ATP = 3-O-(5'-adenylyl)-L-threonyl-[protein] + diphosphate. The enzyme catalyses L-tyrosyl-[protein] + ATP = O-(5'-adenylyl)-L-tyrosyl-[protein] + diphosphate. It carries out the reaction L-histidyl-[protein] + UTP = N(tele)-(5'-uridylyl)-L-histidyl-[protein] + diphosphate. It catalyses the reaction L-seryl-[protein] + UTP = O-(5'-uridylyl)-L-seryl-[protein] + diphosphate. The catalysed reaction is L-tyrosyl-[protein] + UTP = O-(5'-uridylyl)-L-tyrosyl-[protein] + diphosphate. In terms of biological role, nucleotidyltransferase involved in the post-translational modification of proteins. It can catalyze the addition of adenosine monophosphate (AMP) or uridine monophosphate (UMP) to a protein, resulting in modifications known as AMPylation and UMPylation. The sequence is that of Protein nucleotidyltransferase YdiU from Salmonella arizonae (strain ATCC BAA-731 / CDC346-86 / RSK2980).